A 360-amino-acid chain; its full sequence is S-adenosylmethionine-dependent nucleotide dehydratase RSAD2 (360 aa).

The interval 44–71 (KGQPRVRGEPKETQETHEDPGSAQPTTP) is disordered. Positions 49–63 (VRGEPKETQETHEDP) are enriched in basic and acidic residues. The region spanning 68–288 (PTTPVSVNYH…LQRHKDVSCL (221 aa)) is the Radical SAM core domain. [4Fe-4S] cluster is bound by residues Cys82, Cys86, and Cys89. At Lys196 the chain carries N6-acetyllysine. Lys205 participates in a covalent cross-link: Glycyl lysine isopeptide (Lys-Gly) (interchain with G-Cter in ubiquitin).

The protein belongs to the radical SAM superfamily. RSAD2 family. As to quaternary structure, homodimer. Interacts with IRAK1 and TRAF6. Interacts with FPPS. Interacts with HADHB. Interacts (via C-terminus) with VAPA/VAP33 (via C-terminus). [4Fe-4S] cluster serves as cofactor. Acetylated by HAT1. HAT1-mediated acetylation of Lys-196 in turn recruits UBE4A that stimulates RSAD2 polyubiquitination leading to proteasomal degradation. Post-translationally, 'Lys-6'-linked polyubiquitination at Lys-205 leads to RSAD2 protein degradation. As to expression, in neonatal rat tibia, specifically localized in cells of the periosteum, in osteoblasts lining endosteal and peristeal bone surfaces, to articular surfaces of cartilage and in perichondral cells but not in chondrocytes (at protein level). Expressed predominantly in bone marrow and spleen.

The protein localises to the endoplasmic reticulum membrane. Its subcellular location is the golgi apparatus. It localises to the endoplasmic reticulum. The protein resides in the lipid droplet. It is found in the mitochondrion. The protein localises to the mitochondrion inner membrane. Its subcellular location is the mitochondrion outer membrane. The enzyme catalyses CTP + AH2 + S-adenosyl-L-methionine = 3'-deoxy-3',4'-didehydro-CTP + 5'-deoxyadenosine + L-methionine + A + H2O + H(+). Its activity is regulated as follows. IRAK1 and TRAF6 synergistically activate RSAD2 increasing its activity with CTP as substrate about 10-fold. Functionally, interferon-inducible antiviral protein which plays a major role in the cell antiviral state induced by type I and type II interferon. Catalyzes the conversion of cytidine triphosphate (CTP) to 3'-deoxy-3',4'-didehydro-CTP (ddhCTP) via a SAM-dependent radical mechanism. In turn, ddhCTP acts as a chain terminator for the RNA-dependent RNA polymerases from multiple viruses and directly inhibits viral replication. Therefore, inhibits a wide range of DNA and RNA viruses. Also promotes TLR7 and TLR9-dependent production of IFN-beta production in plasmacytoid dendritic cells (pDCs) by facilitating 'Lys-63'-linked ubiquitination of IRAK1 by TRAF6. Plays a role in CD4+ T-cells activation and differentiation. Facilitates T-cell receptor (TCR)-mediated GATA3 activation and optimal T-helper 2 (Th2) cytokine production by modulating NFKB1 and JUNB activities. Can inhibit secretion of soluble proteins. In Rattus norvegicus (Rat), this protein is S-adenosylmethionine-dependent nucleotide dehydratase RSAD2.